Consider the following 444-residue polypeptide: Zeaxanthin 4-ketolase (444 aa).

Residues 408-444 (VAGGSSSGGGGEGGKPGAGEHGLLQRQRQLAPVGVMA) form a disordered region. Residues 412–427 (SSSGGGGEGGKPGAGE) show a composition bias toward gly residues.

The catalysed reaction is all-trans-adonixanthin + 2 AH2 + 2 O2 = all-trans-(3S,3'S)-astaxanthin + 2 A + 3 H2O. It carries out the reaction all-trans-zeaxanthin + 2 AH2 + 2 O2 = all-trans-adonixanthin + 2 A + 3 H2O. It catalyses the reaction echinenone + 2 AH2 + 2 O2 = canthaxanthin + 2 A + 3 H2O. The enzyme catalyses all-trans-beta-carotene + 2 AH2 + 2 O2 = echinenone + 2 A + 3 H2O. The protein operates within carotenoid biosynthesis; astaxanthin biosynthesis. Its function is as follows. Involved in the biosynthesis of ketocarotenoids which are powerful anti-oxidative molecules. Catalyzes the conversion of zeaxanthin to astaxanthin via adonixanthin. Catalyzes the conversion of beta-carotene to canthaxanthin via echinenone. This Chlamydomonas reinhardtii (Chlamydomonas smithii) protein is Zeaxanthin 4-ketolase.